A 178-amino-acid polypeptide reads, in one-letter code: FXYD domain-containing ion transport regulator 5 (178 aa).

Positions 1–21 (MSPPSQLCLLTIVALILPSEG) are cleaved as a signal peptide. The interval 21-126 (GQTPEKPRSS…YMPPSYIENP (106 aa)) is disordered. Topologically, residues 22–146 (QTPEKPRSSF…YDNTTLRKRG (125 aa)) are extracellular. Over residues 29–58 (SSFTAHQSSVTTHVPVPDQTSPGVQTTPPI) the composition is skewed to polar residues. Low complexity predominate over residues 70 to 79 (QTAAKTKTQQ). A helical membrane pass occupies residues 147 to 164 (LLVAAVLFITGIIILTSG). Residues 165 to 178 (KCRQFSQLCLNRHR) lie on the Cytoplasmic side of the membrane.

The protein belongs to the FXYD family. As to quaternary structure, regulatory subunit of the sodium/potassium-transporting ATPase which is composed of a catalytic alpha subunit, a non-catalytic beta subunit and an additional regulatory subunit. The regulatory subunit, a member of the FXYD protein family, modulates the enzymatic activity in a tissue- and isoform-specific way by changing affinities of the Na+/K+-ATPase toward Na(+), K(+) or ATP. Post-translationally, glycosylated. As to expression, spleen, lung, skeletal muscle, and testis.

The protein localises to the cell membrane. Its subcellular location is the basolateral cell membrane. Associates with and regulates the activity of the sodium/potassium-transporting ATPase (NKA) which catalyzes the hydrolysis of ATP coupled with the exchange of Na(+) and K(+) ions across the plasma membrane. May increase NKA activity by increasing the apparent affinity for Na(+). Involved in down-regulation of E-cadherin which results in reduced cell adhesion. Promotes metastasis. The polypeptide is FXYD domain-containing ion transport regulator 5 (Fxyd5) (Rattus norvegicus (Rat)).